We begin with the raw amino-acid sequence, 21 residues long: GMASKAGQVLGKLAKVAIGAA.

Ala21 bears the Alanine amide mark.

Expressed by the skin glands.

The protein localises to the secreted. Its function is as follows. Antimicrobial peptide. The protein is Peptide PGLa-BM2 of Xenopus boumbaensis (Mawa clawed frog).